The chain runs to 137 residues: Probable 4-amino-4-deoxy-L-arabinose-phosphoundecaprenol flippase subunit ArnF (137 aa).

Topologically, residues Met-1–Arg-5 are cytoplasmic. Residues Gly-6–Trp-26 traverse the membrane as a helical segment. Residues Ser-27–Ala-49 lie on the Periplasmic side of the membrane. The helical transmembrane segment at Ala-50–Leu-70 threads the bilayer. Residues Ala-71–Ala-80 lie on the Cytoplasmic side of the membrane. Residues Tyr-81 to Phe-101 traverse the membrane as a helical segment. Asn-102 is a topological domain (periplasmic). Residues Glu-103–Ile-123 form a helical membrane-spanning segment. The Cytoplasmic portion of the chain corresponds to Asn-124–Pro-137.

This sequence belongs to the ArnF family. As to quaternary structure, heterodimer of ArnE and ArnF.

The protein resides in the cell inner membrane. The protein operates within bacterial outer membrane biogenesis; lipopolysaccharide biosynthesis. Functionally, translocates 4-amino-4-deoxy-L-arabinose-phosphoundecaprenol (alpha-L-Ara4N-phosphoundecaprenol) from the cytoplasmic to the periplasmic side of the inner membrane. The chain is Probable 4-amino-4-deoxy-L-arabinose-phosphoundecaprenol flippase subunit ArnF from Pseudomonas fluorescens (strain ATCC BAA-477 / NRRL B-23932 / Pf-5).